Consider the following 83-residue polypeptide: Kunitz-type serine protease inhibitor nigrescinin-1 (83 aa).

A signal peptide spans 1–24 (MSSGGLLLLLGLLTLWEALTPVSS). Residues 31-81 (CELPEDSGPCKGLFHVFYYNSDQNQCLEFIYGGCYGNANNFKTIEECKRTC) enclose the BPTI/Kunitz inhibitor domain. 2 disulfide bridges follow: Cys-40–Cys-64 and Cys-56–Cys-77.

This sequence belongs to the venom Kunitz-type family. In terms of tissue distribution, expressed by the venom gland.

It is found in the secreted. Serine protease inhibitor. The polypeptide is Kunitz-type serine protease inhibitor nigrescinin-1 (Cryptophis nigrescens (Eastern small-eyed snake)).